The chain runs to 1412 residues: Protein MODIFIER OF SNC1 1 (1412 aa).

Disordered regions lie at residues 1–276, 384–437, 472–798, 827–888, 909–1144, and 1156–1412; these read MTSS…QSYP, GYGS…TQRP, QQMQ…KQKQ, NEGV…DESI, DIKV…WNDG, and AEEM…GDRN. Residues 56–103 are compositionally biased toward polar residues; it reads SWGSKSSLNAWGTSSLSPRTESGPGSPSHLSNRPSSGGSVTRPSTADS. Ser72 is subject to Phosphoserine. Over residues 109-119 the composition is skewed to low complexity; that stretch reads SSSSVAWDSNS. The segment covering 120–135 has biased composition (polar residues); it reads RPSSASGVFPSNQPSV. Composition is skewed to basic and acidic residues over residues 197 to 207 and 236 to 267; these read AEKDTSEKSTR and ANDR…EGQL. A compositionally biased stretch (basic and acidic residues) spans 478 to 488; sequence RNERREIRNDA. Polar residues-rich tracts occupy residues 517-531, 539-553, 565-581, and 610-639; these read KTRT…SSVV, QPRT…NKVS, SKNS…TNKN, and RIVN…TNTE. Over residues 665-713 the composition is skewed to basic and acidic residues; the sequence is DPKDNQRSTMRELARQRAQQRQKEEEERARDQRAKALAKLEELNRRSQI. Positions 667-717 form a coiled coil; that stretch reads KDNQRSTMRELARQRAQQRQKEEEERARDQRAKALAKLEELNRRSQIYEEG. Composition is skewed to polar residues over residues 738 to 749, 756 to 779, and 829 to 847; these read GSHSSNATNSVE, KNTT…QQDN, and GVSS…SAES. Over residues 850-862 the composition is skewed to basic residues; it reads PKRKNNRNGKKKH. Over residues 877–888 the composition is skewed to basic and acidic residues; sequence VGKETKSGDESI. A Phosphoserine modification is found at Ser883. Polar residues-rich tracts occupy residues 914 to 938 and 983 to 1003; these read GDSS…NWKS and QTTV…QTSS. The span at 1006–1023 shows a compositional bias: basic and acidic residues; the sequence is KRVEIERYVPKPIVKEMA. A compositionally biased stretch (polar residues) spans 1056 to 1070; the sequence is LQPSGSTAGKSGSPS. The span at 1071-1084 shows a compositional bias: basic residues; the sequence is KSRHGNGRQGKHGR. Residues 1106–1137 show a composition bias toward polar residues; the sequence is FVTSNQPIRGTVNYHSSKQTEQIAAKDQTTCN. Basic and acidic residues-rich tracts occupy residues 1191 to 1202, 1222 to 1232, and 1242 to 1251; these read DPKKGNKRDFNK, KEGRVPGDHVW, and GGRESTRDKP. 2 stretches are compositionally biased toward polar residues: residues 1266 to 1286 and 1293 to 1307; these read GFTT…QNRS and VEQN…NTGQ. 2 stretches are compositionally biased toward basic and acidic residues: residues 1338-1351 and 1359-1369; these read SNRD…HYEY and YDGERSREQSK. Over residues 1384 to 1397 the composition is skewed to low complexity; the sequence is QGQQRQGGYQQQRG. Over residues 1400 to 1412 the composition is skewed to gly residues; it reads GRNGGHGFTGDRN.

Interacts with TCP14 and TCP15.

Its function is as follows. Involved in the regulation of the chromatin structure and DNA methylation at the SNC1 locus. Regulates the expression of SNC1 at chromatin level. The polypeptide is Protein MODIFIER OF SNC1 1 (MOS1) (Arabidopsis thaliana (Mouse-ear cress)).